We begin with the raw amino-acid sequence, 458 residues long: Bifunctional protein GlmU (458 aa).

Positions 1–228 are pyrophosphorylase; it reads MHPKLDILIL…DWEVLGVNSK (228 aa). UDP-N-acetyl-alpha-D-glucosamine is bound by residues 10-13, Lys24, Gln75, 80-81, 102-104, Gly139, Glu153, Asn168, and Asn226; these read LAAG, GT, and YGD. Residue Asp104 participates in Mg(2+) binding. Asn226 contacts Mg(2+). A linker region spans residues 229-249; sequence AQLAELERIHQNEVAQRLLAD. Residues 250 to 458 form an N-acetyltransferase region; sequence GVTLMDPARL…KRPIKPKKEG (209 aa). Residues Arg332 and Lys350 each contribute to the UDP-N-acetyl-alpha-D-glucosamine site. Residue His362 is the Proton acceptor of the active site. UDP-N-acetyl-alpha-D-glucosamine-binding residues include Tyr365 and Asn376. Residues Ala379, 385–386, Ser404, Ala422, and Arg439 contribute to the acetyl-CoA site; that span reads NY.

It in the N-terminal section; belongs to the N-acetylglucosamine-1-phosphate uridyltransferase family. In the C-terminal section; belongs to the transferase hexapeptide repeat family. Homotrimer. The cofactor is Mg(2+).

Its subcellular location is the cytoplasm. It carries out the reaction alpha-D-glucosamine 1-phosphate + acetyl-CoA = N-acetyl-alpha-D-glucosamine 1-phosphate + CoA + H(+). The enzyme catalyses N-acetyl-alpha-D-glucosamine 1-phosphate + UTP + H(+) = UDP-N-acetyl-alpha-D-glucosamine + diphosphate. Its pathway is nucleotide-sugar biosynthesis; UDP-N-acetyl-alpha-D-glucosamine biosynthesis; N-acetyl-alpha-D-glucosamine 1-phosphate from alpha-D-glucosamine 6-phosphate (route II): step 2/2. It participates in nucleotide-sugar biosynthesis; UDP-N-acetyl-alpha-D-glucosamine biosynthesis; UDP-N-acetyl-alpha-D-glucosamine from N-acetyl-alpha-D-glucosamine 1-phosphate: step 1/1. The protein operates within bacterial outer membrane biogenesis; LPS lipid A biosynthesis. In terms of biological role, catalyzes the last two sequential reactions in the de novo biosynthetic pathway for UDP-N-acetylglucosamine (UDP-GlcNAc). The C-terminal domain catalyzes the transfer of acetyl group from acetyl coenzyme A to glucosamine-1-phosphate (GlcN-1-P) to produce N-acetylglucosamine-1-phosphate (GlcNAc-1-P), which is converted into UDP-GlcNAc by the transfer of uridine 5-monophosphate (from uridine 5-triphosphate), a reaction catalyzed by the N-terminal domain. This Thiobacillus denitrificans (strain ATCC 25259 / T1) protein is Bifunctional protein GlmU.